A 201-amino-acid polypeptide reads, in one-letter code: Recombination protein RecR (201 aa).

The segment at 60–75 (CSRCGNVDTVDPCTVC) adopts a C4-type zinc-finger fold. One can recognise a Toprim domain in the interval 83–178 (SVIIVVEDVS…KITRLAHGVP (96 aa)).

The protein belongs to the RecR family.

May play a role in DNA repair. It seems to be involved in an RecBC-independent recombinational process of DNA repair. It may act with RecF and RecO. This is Recombination protein RecR from Rhizobium etli (strain CIAT 652).